The sequence spans 488 residues: MQYRDLRDFISGLEQRSELKRIQVPVSPVLEMTEVCDRTLRAKGPALLFENPTGYDIPVLGNLFGTPERVALGMGAEAVSELREIGKLLAFLKEPEPPKGLKDAWSKLPIFRKIISMAPKVVKDAVCQEVVIEGDDVDLGMLPVQTCWPGDVGPLITWGLTVTKGPNKDRQNLGIYRQQVIGRNKVIMRWLSHRGGALDYREWCEKHPGQPFPVSVALGADPATILGAVTPVPDSLSEYAFAGLLRGNRTELVKCRGNDLQVPATAEIILEGVIHPGEMADEGPYGDHTGYYNEVDSFPVFTVERITHRIKPIYHSTYTGRPPDEPAILGVALNEVFVPILQKQFPEITDFYLPPEGCSYRMAVVTMKKQYPGHAKRVMLGVWSFLRQFMYTKFVIVTDDDINARDWNDVIWAITTRMDPKRDTVMIDNTPIDYLDFASPVSGLGSKMGLDATHKWPGETTREWGRVIVKDEAVTRRIDAIWNQLGID.

N172 contacts Mn(2+). Residues 175 to 177, 189 to 191, and 194 to 195 each bind prenylated FMN; these read IYR, RWL, and RG. E238 lines the Mn(2+) pocket. The active-site Proton donor is the D287.

Belongs to the UbiD family. As to quaternary structure, homohexamer. It depends on prenylated FMN as a cofactor. Mn(2+) is required as a cofactor.

Its subcellular location is the cell membrane. It catalyses the reaction a 4-hydroxy-3-(all-trans-polyprenyl)benzoate + H(+) = a 2-(all-trans-polyprenyl)phenol + CO2. The protein operates within cofactor biosynthesis; ubiquinone biosynthesis. Its function is as follows. Catalyzes the decarboxylation of 3-octaprenyl-4-hydroxy benzoate to 2-octaprenylphenol, an intermediate step in ubiquinone biosynthesis. This chain is 3-octaprenyl-4-hydroxybenzoate carboxy-lyase, found in Pseudomonas fluorescens (strain ATCC BAA-477 / NRRL B-23932 / Pf-5).